The sequence spans 242 residues: UPF0073 membrane protein Rv1085c (242 aa).

A run of 7 helical transmembrane segments spans residues 42–62 (VYSAGTAVLAGASLVAVSWAV), 67–87 (AGLTTLAYTAATITMFTVSAT), 108–128 (SMIFVFIAGSYTPFALLALPA), 133–153 (VVLSIVWGGAIAGILLKMCWP), 159–179 (VGVPLYLLLGWVAVWYTATIL), 186–206 (ALVLLFVGGALYSIGGILYAV), and 222–242 (FHACTAVAAICHYIAMWFVVF).

It belongs to the UPF0073 (Hly-III) family.

It localises to the cell membrane. The polypeptide is UPF0073 membrane protein Rv1085c (Mycobacterium tuberculosis (strain ATCC 25618 / H37Rv)).